We begin with the raw amino-acid sequence, 81 residues long: Translational regulator CsrA (81 aa).

This sequence belongs to the CsrA/RsmA family. Homodimer; the beta-strands of each monomer intercalate to form a hydrophobic core, while the alpha-helices form wings that extend away from the core.

It is found in the cytoplasm. A translational regulator that binds mRNA to regulate translation initiation and/or mRNA stability. Usually binds in the 5'-UTR at or near the Shine-Dalgarno sequence preventing ribosome-binding, thus repressing translation. Its main target seems to be the major flagellin gene, while its function is anatagonized by FliW. The protein is Translational regulator CsrA of Desulforapulum autotrophicum (strain ATCC 43914 / DSM 3382 / VKM B-1955 / HRM2) (Desulfobacterium autotrophicum).